We begin with the raw amino-acid sequence, 852 residues long: Zinc finger protein 484 (852 aa).

The 71-residue stretch at 8-78 (VSFKDVTVDF…DGEIPSQSRP (71 aa)) folds into the KRAB domain. A Glycyl lysine isopeptide (Lys-Gly) (interchain with G-Cter in SUMO2) cross-link involves residue K156. A C2H2-type 1; degenerate zinc finger spans residues 223 to 245 (CECNQCGKPLHHKQALIQQQKIH). A C2H2-type 2; degenerate zinc finger spans residues 279–301 (HECHECEAVFTQKSQLDGSQRVY). A C2H2-type 3; degenerate zinc finger spans residues 328-350 (YKCSDYGRAFIQKSDLFRCQRIH). A C2H2-type 4; degenerate zinc finger spans residues 356 to 378 (YEYSECEKNLPQNSNLNIHKKIH). 15 C2H2-type zinc fingers span residues 384–406 (FECT…QKIH), 412–434 (YVCT…ERIH), 440–462 (YECS…QRIH), 468–490 (FICS…QKIH), 496–518 (YICT…QKIH), 524–546 (YKCS…QKCH), 552–574 (YECS…QRIH), 580–602 (YVCT…ERIH), 608–630 (YECS…QQIH), 636–658 (YRCA…QKIH), 664–686 (YKCS…QQSH), 692–714 (YECS…QRIH), 720–742 (YICN…RRIH), 748–770 (YECS…HRIH), and 776–798 (YICA…QKIH). Residue K816 forms a Glycyl lysine isopeptide (Lys-Gly) (interchain with G-Cter in SUMO2) linkage.

Belongs to the krueppel C2H2-type zinc-finger protein family.

It is found in the nucleus. In terms of biological role, may be involved in transcriptional regulation. The protein is Zinc finger protein 484 (ZNF484) of Homo sapiens (Human).